Consider the following 249-residue polypeptide: Triosephosphate isomerase (249 aa).

Residue Asn9 to Lys11 participates in substrate binding. His94 acts as the Electrophile in catalysis. Glu166 acts as the Proton acceptor in catalysis. Residues Gly172, Ser214, and Gly235 to Gly236 contribute to the substrate site.

The protein belongs to the triosephosphate isomerase family. Homodimer.

It is found in the cytoplasm. It carries out the reaction D-glyceraldehyde 3-phosphate = dihydroxyacetone phosphate. It functions in the pathway carbohydrate biosynthesis; gluconeogenesis. Its pathway is carbohydrate degradation; glycolysis; D-glyceraldehyde 3-phosphate from glycerone phosphate: step 1/1. Its function is as follows. Involved in the gluconeogenesis. Catalyzes stereospecifically the conversion of dihydroxyacetone phosphate (DHAP) to D-glyceraldehyde-3-phosphate (G3P). In Leptospira biflexa serovar Patoc (strain Patoc 1 / Ames), this protein is Triosephosphate isomerase.